We begin with the raw amino-acid sequence, 35 residues long: VVXXQTLXDXRGIYGDQGSIGPXXIXGLQGDRDAD.

The interval 1-35 (VVXXQTLXDXRGIYGDQGSIGPXXIXGLQGDRDAD) is disordered.

The sequence is that of Unknown protein 14 from 2D-PAGE from Bombyx mori (Silk moth).